A 123-amino-acid polypeptide reads, in one-letter code: Protein crumbs homolog 3 (123 aa).

Residues 1-26 (MASPGLGLLLALGLPLLPARWGRAWG) form the signal peptide. Topologically, residues 27–59 (QTLDPHVNENGTITPSAPGSGSNGALSQEAITA) are extracellular. N36 is a glycosylation site (N-linked (GlcNAc...) asparagine). A helical transmembrane segment spans residues 60–80 (IIVVFSLLAAVLLAVGLVLLL). The Cytoplasmic portion of the chain corresponds to 81-120 (RKLREKRQTQGTYRPSSEEQFNHAAEARAPQDSKETVRGC). The interval 87–123 (RQTQGTYRPSSEEQFNHAAEARAPQDSKETVRGCLPI) is disordered. The span at 96–117 (SSEEQFNHAAEARAPQDSKETV) shows a compositional bias: basic and acidic residues. A PDZ-binding motif is present at residues 119–123 (GCLPI).

Component of a complex composed of CRB3, PALS1 and PATJ. Interacts (via C-terminus) with PALS1 (via PDZ domain). Interacts with PARD6A. Interacts (via intracellular domain) with EPB41L5. Interacts with WDR83.

The protein resides in the apical cell membrane. Its subcellular location is the cell junction. It is found in the tight junction. Its function is as follows. Involved in the establishment of cell polarity in mammalian epithelial cells. Regulates the morphogenesis of tight junctions. Involved in promoting phosphorylation and cytoplasmic retention of transcriptional coactivators YAP1 and WWTR1/TAZ which leads to suppression of TGFB1-dependent transcription of target genes such as CCN2/CTGF, SERPINE1/PAI1, SNAI1/SNAIL1 and SMAD7. This is Protein crumbs homolog 3 from Canis lupus familiaris (Dog).